Here is a 506-residue protein sequence, read N- to C-terminus: PHD finger protein 10 (506 aa).

2 disordered regions span residues 1-66 and 293-377; these read MAAV…QDFG and DPEL…SVSG. Residues 23–35 show a composition bias toward basic and acidic residues; the sequence is VKEDNSNDTKDPE. Residues 52–66 show a composition bias toward polar residues; that stretch reads GDSTPSCENSNQDFG. The tract at residues 90-299 is SAY; sequence MLQEQVSEYL…DPLDPELLAL (210 aa). A compositionally biased stretch (low complexity) spans 326–338; it reads SIDSSSMNMSESD. The span at 353-367 shows a compositional bias: basic and acidic residues; that stretch reads KVKEKSSTPRKEGSK. Residues 387 to 444 form a PHD-type 1; degenerate zinc finger; that stretch reads ICGICLKGKDANKKGRSERLIHCSQCDNSGHPSCLDMSAELVAVIKKYPWQCMECKTC. Residues 446-489 form a PHD-type 2; degenerate zinc finger; the sequence is ICGQPHHEEEMMFCDTCDRGYHTFCVGLGALPSGRWICDCCQKV.

Belongs to the SAYP family. As to quaternary structure, component of neural progenitors-specific chromatin remodeling complex (npBAF complex), a subfamily of ATP-dependent SWI/SNF chromatin remodeling complexes.

The protein resides in the nucleus. In terms of biological role, involved in transcription activity regulation by chromatin remodeling in the context of the neural progenitors-specific chromatin remodeling complex (npBAF complex). May play a role in the proliferation of neural progenitors. The chain is PHD finger protein 10 (phf10) from Xenopus laevis (African clawed frog).